We begin with the raw amino-acid sequence, 201 residues long: Recombination protein RecR (201 aa).

The segment at 57–72 (CADCRTFTEQEVCNIC) adopts a C4-type zinc-finger fold. One can recognise a Toprim domain in the interval 81-176 (GQICVVESPA…EASRIAHGVP (96 aa)).

It belongs to the RecR family.

May play a role in DNA repair. It seems to be involved in an RecBC-independent recombinational process of DNA repair. It may act with RecF and RecO. The chain is Recombination protein RecR from Escherichia coli O6:K15:H31 (strain 536 / UPEC).